We begin with the raw amino-acid sequence, 599 residues long: Kelch-like protein 24a (599 aa).

In terms of domain architecture, BTB spans 65 to 132; that stretch reads TDVIISVQGR…VYTGRACITT (68 aa). The region spanning 167-269 is the BACK domain; that stretch reads CLGIQRFADA…HPNYFVQTVE (103 aa). 6 Kelch repeats span residues 313 to 362, 364 to 406, 407 to 453, 455 to 501, 503 to 543, and 545 to 591; these read VIVV…ALRN, IILS…VLLG, KVYA…SCAG, LFVI…SLNH, IYVC…VCNG, and IYIL…TVHR.

In terms of assembly, forms homodimers. Component of the BCR(KLHL24) E3 ubiquitin ligase complex.

The protein resides in the perikaryon. It is found in the cell projection. The protein localises to the axon. It localises to the cytoplasm. Its subcellular location is the cell junction. The protein resides in the desmosome. It is found in the adherens junction. Its function is as follows. Necessary to maintain the balance between intermediate filament stability and degradation, a process that is essential for skin integrity. Reduces kainate receptor-mediated currents in brain neurons, most probably by modulating channel properties. It is required for proper heart development. This chain is Kelch-like protein 24a, found in Danio rerio (Zebrafish).